A 287-amino-acid chain; its full sequence is Bifunctional protein FolD (287 aa).

NADP(+)-binding positions include 160-162 (GRS), Ser189, and Thr230.

Belongs to the tetrahydrofolate dehydrogenase/cyclohydrolase family. In terms of assembly, homodimer.

The catalysed reaction is (6R)-5,10-methylene-5,6,7,8-tetrahydrofolate + NADP(+) = (6R)-5,10-methenyltetrahydrofolate + NADPH. It carries out the reaction (6R)-5,10-methenyltetrahydrofolate + H2O = (6R)-10-formyltetrahydrofolate + H(+). It participates in one-carbon metabolism; tetrahydrofolate interconversion. Catalyzes the oxidation of 5,10-methylenetetrahydrofolate to 5,10-methenyltetrahydrofolate and then the hydrolysis of 5,10-methenyltetrahydrofolate to 10-formyltetrahydrofolate. The protein is Bifunctional protein FolD of Chlamydia trachomatis serovar D (strain ATCC VR-885 / DSM 19411 / UW-3/Cx).